We begin with the raw amino-acid sequence, 1121 residues long: tRNA (34-2'-O)-methyltransferase regulator WDR6 (1121 aa).

At Met1 the chain carries N-acetylmethionine. WD repeat units follow at residues 53–97, 105–143, 147–189, 200–238, 247–285, 289–327, 335–376, 381–422, 425–470, 476–520, 559–598, 604–642, 645–684, 739–785, 848–893, 901–946, 970–1012, 1036–1073, and 1079–1121; these read IKRV…VVKI, RELW…LYDP, CILQ…VWYP, APDR…IWKV, RVQN…VWSH, ILQA…LWHL, LGVS…LYDV, WEQL…VVPI, PTAA…ISAA, IFVK…LFPS, PVST…FVRD, VLRQ…VWNP, HEKL…LYRA, LTDI…VWGI, HNRH…LFLL, QLLA…FWDL, GTPS…VFVL, EEYS…FWRL, and TFMN…NWYD.

The protein belongs to the WD repeat WDR6 family. As to quaternary structure, interacts with FTSJ1; the interaction is direct, and required for 2'-O-methylation of position 34 in substrate tRNAs. Interacts with IRS4. Interacts with STK11/LKB1.

It localises to the cytoplasm. Its function is as follows. Together with methyltransferase FTSJ1, methylates the 2'-O-ribose of nucleotides at position 34 of the tRNA anticodon loop of substrate tRNAs. Required for the correct positioning of the substrate tRNA for methylation. Required to suppress amino acid starvation-induced autophagy. Enhances the STK11/LKB1-induced cell growth suppression activity. In Pongo abelii (Sumatran orangutan), this protein is tRNA (34-2'-O)-methyltransferase regulator WDR6 (WDR6).